Consider the following 338-residue polypeptide: tRNA N6-adenosine threonylcarbamoyltransferase (338 aa).

Fe cation-binding residues include His111 and His115. Residues Leu134 to Gly138, Asp167, Gly180, and Asn272 contribute to the substrate site. Asp300 contributes to the Fe cation binding site.

Belongs to the KAE1 / TsaD family. Fe(2+) is required as a cofactor.

The protein resides in the cytoplasm. It carries out the reaction L-threonylcarbamoyladenylate + adenosine(37) in tRNA = N(6)-L-threonylcarbamoyladenosine(37) in tRNA + AMP + H(+). Its function is as follows. Required for the formation of a threonylcarbamoyl group on adenosine at position 37 (t(6)A37) in tRNAs that read codons beginning with adenine. Is involved in the transfer of the threonylcarbamoyl moiety of threonylcarbamoyl-AMP (TC-AMP) to the N6 group of A37, together with TsaE and TsaB. TsaD likely plays a direct catalytic role in this reaction. This chain is tRNA N6-adenosine threonylcarbamoyltransferase, found in Shewanella baltica (strain OS223).